The sequence spans 162 residues: Ribosome maturation factor RimP (162 aa).

The protein belongs to the RimP family.

Its subcellular location is the cytoplasm. Required for maturation of 30S ribosomal subunits. The polypeptide is Ribosome maturation factor RimP (Cupriavidus pinatubonensis (strain JMP 134 / LMG 1197) (Cupriavidus necator (strain JMP 134))).